The sequence spans 110 residues: MAEDELAEIRRRKMAEMQQHAAMQQQDMERQQQYEAQMQMALMQILEPEARERLNTIKLTKPDFARAVEQQLVMLAQSGRIKNKISDDQLKVILQQVTPAKREFNIRRKG.

It belongs to the PDCD5 family.

This is DNA-binding protein Mhun_3016 from Methanospirillum hungatei JF-1 (strain ATCC 27890 / DSM 864 / NBRC 100397 / JF-1).